A 554-amino-acid chain; its full sequence is Transcription factor 7-like 1-A (554 aa).

A compositionally biased stretch (gly residues) spans 1 to 11; the sequence is MPQLNSGGGDE. The interval 1 to 61 is interaction with CTNNB1-A; sequence MPQLNSGGGD…SENHSSDSDS (61 aa). Disordered stretches follow at residues 1–73, 183–213, and 391–475; these read MPQL…REAF, GTPPGHLSPEIDPKTGIPRPPHPSELSPYYP, and WSAR…LTTK. Composition is skewed to basic and acidic residues over residues 17–32 and 52–73; these read ELIRFKDEGEQEEKSP and SENHSSDSDSEVERRPPPREAF. The interaction with AES and TLE4-A stretch occupies residues 109–312; that stretch reads LGGHYLPNGA…SPNLHTKSNM (204 aa). The HMG box DNA-binding region spans 324 to 392; it reads IKKPLNAFML…LHSQLYPSWS (69 aa). A compositionally biased stretch (basic and acidic residues) spans 407–416; it reads KQSPEMETHT. An interaction with CTBP-B region spans residues 408-554; that stretch reads QSPEMETHTK…PLSLVTKSSD (147 aa). Positions 445–464 are enriched in low complexity; sequence SPATPSAALASPAAPAATHS. Positions 465–474 are enriched in polar residues; that stretch reads EQAQPLSLTT.

It belongs to the TCF/LEF family. As to quaternary structure, interacts with csnk1e, ctnnb1-A, ctbp-B, dact1-A and gsk3b. May interact with ase and tle4-A. In terms of processing, phosphorylated. Phosphorylation by csnk1e promotes binding to ctnnb1-A while phosphorylation by gsk3b may reverse this effect.

Its subcellular location is the cytoplasm. It localises to the nucleus. In terms of biological role, participates in the Wnt signaling pathway. Binds to DNA and acts as a repressor in the absence of ctnnb1-A and possibly ctnnb1-B, and as an activator in the presence of these proteins. Required early in development for the establishment of the dorsal body axis in response to maternal Wnt signaling. Also required during development of the CNS for the establishment of dorsal-ventral patterning in the prospective diencephalon. This is Transcription factor 7-like 1-A (tcf7l1-a) from Xenopus laevis (African clawed frog).